The sequence spans 200 residues: 3-isopropylmalate dehydratase small subunit (200 aa).

Belongs to the LeuD family. LeuD type 1 subfamily. Heterodimer of LeuC and LeuD.

It carries out the reaction (2R,3S)-3-isopropylmalate = (2S)-2-isopropylmalate. The protein operates within amino-acid biosynthesis; L-leucine biosynthesis; L-leucine from 3-methyl-2-oxobutanoate: step 2/4. Functionally, catalyzes the isomerization between 2-isopropylmalate and 3-isopropylmalate, via the formation of 2-isopropylmaleate. This Sodalis glossinidius (strain morsitans) protein is 3-isopropylmalate dehydratase small subunit.